A 206-amino-acid polypeptide reads, in one-letter code: Ras-related protein Rab7 (206 aa).

GTP is bound by residues 15–22 (GDSGVGKT), 63–67 (DTAGQ), and 125–128 (NKID). 2 S-geranylgeranyl cysteine lipidation sites follow: cysteine 204 and cysteine 206. The residue at position 206 (cysteine 206) is a Cysteine methyl ester.

Belongs to the small GTPase superfamily. Rab family.

Its subcellular location is the cell membrane. Functionally, protein transport. Probably involved in vesicular traffic. This is Ras-related protein Rab7 from Pisum sativum (Garden pea).